Reading from the N-terminus, the 180-residue chain is Non-structural protein 4 (180 aa).

The next 2 helical transmembrane spans lie at 16–36 (VCVH…VTVI) and 52–72 (IVST…AILG).

Its subcellular location is the host membrane. The polypeptide is Non-structural protein 4 (Segment-11) (Banna virus (BAV)).